The following is a 33-amino-acid chain: Photosystem II reaction center protein Psb30 (33 aa).

The chain crosses the membrane as a helical span at residues 5–25; sequence IVAQLTVLALIVVSGPLVIAL.

It belongs to the Psb30/Ycf12 family. As to quaternary structure, PSII is composed of 1 copy each of membrane proteins PsbA, PsbB, PsbC, PsbD, PsbE, PsbF, PsbH, PsbI, PsbJ, PsbK, PsbL, PsbM, PsbT, PsbX, PsbY, PsbZ, Psb30/Ycf12, peripheral proteins of the oxygen-evolving complex and a large number of cofactors. It forms dimeric complexes.

The protein localises to the plastid. It localises to the chloroplast thylakoid membrane. Functionally, a core subunit of photosystem II (PSII), probably helps stabilize the reaction center. This Angiopteris evecta (Mule's foot fern) protein is Photosystem II reaction center protein Psb30.